The primary structure comprises 185 residues: MADLRDEKGNPIHLTDTQGNPIVDLTDEHGNPMYLTGVVSSTPQHKESTTSDIAEHPTSTVGETHPAAAPAGAGAATAATATGVSAGTGATTTGQQHHGSLEEHLRRSGSSSSSSSEDDGQGGRRKKSIKEKIKEKFGSGKHKDEQTPATATTTGPATTDQPHEKKGILEKIKDKLPGHHNHNHP.

Basic and acidic residues-rich tracts occupy residues 1 to 10 (MADLRDEKGN) and 44 to 55 (QHKESTTSDIAE). The tract at residues 1–185 (MADLRDEKGN…LPGHHNHNHP (185 aa)) is disordered. Over residues 67-94 (AAAPAGAGAATAATATGVSAGTGATTTG) the composition is skewed to low complexity. The segment covering 130-146 (KEKIKEKFGSGKHKDEQ) has biased composition (basic and acidic residues). Low complexity predominate over residues 147-159 (TPATATTTGPATT). The span at 161–177 (QPHEKKGILEKIKDKLP) shows a compositional bias: basic and acidic residues.

Belongs to the plant dehydrin family.

This chain is Probable dehydrin LEA (LEA), found in Arabidopsis thaliana (Mouse-ear cress).